Here is a 195-residue protein sequence, read N- to C-terminus: Dehydrin DHN1 (195 aa).

Positions 1-195 are disordered; sequence MAEYGDQYGR…IKEKLPGGHH (195 aa). Residues 37–48 are compositionally biased toward low complexity; that stretch reads YGTTGTTVGYGT. Polar residues predominate over residues 50–64; it reads QCVTTVTTGAQKTDQ. Positions 65–88 are enriched in low complexity; the sequence is YGTPGTTGAYGTDQYGTTGTTGEY. Basic and acidic residues-rich tracts occupy residues 136 to 153 and 173 to 195; these read KEKI…DDQT and SPEH…GGHH.

Belongs to the plant dehydrin family. Phosphorylated in vitro by CK2. As to expression, expressed in roots and leaves.

The protein localises to the cytoplasm. It localises to the nucleus. The sequence is that of Dehydrin DHN1 from Avicennia marina (Grey mangrove).